The sequence spans 196 residues: Mitochondrial inner membrane protein SHH3 (196 aa).

The transit peptide at 1-53 (MKATIQRVTSVFGVPRASVFVPRISTPFILHNYISNGRMDLFSKEFHNGRVSK) directs the protein to the mitochondrion. Residues 54–97 (SDLWSSNKEEELLVSQRKKRPISPHLTVYEPEMSWYLSSLHRIS) lie on the Mitochondrial matrix side of the membrane. A ubiquinone-binding residues include Ser91 and Arg95. A helical transmembrane segment spans residues 98-118 (GVLLALGFYAFTITLGVTTIM). Over 119 to 137 (GMDTTFQDLNKWYHEKMPK) the chain is Mitochondrial intermembrane. Residues 138-160 (WSQWVAKGSAAYLFAFHFGNGIR) form a helical membrane-spanning segment. His154 contributes to the heme binding site. The Mitochondrial matrix segment spans residues 161–174 (HLIWDMGYELTNRG). A helical transmembrane segment spans residues 175 to 195 (VIKTGSIVLAGTLVLGTYLLA). Position 196 (Gln196) is a topological domain, mitochondrial intermembrane.

This sequence belongs to the cytochrome b560 family.

It localises to the mitochondrion inner membrane. Functionally, homolog of SDH3, but seems not to be a stoichiometric subunit of either the succinate dehydrogenase (SDH) complex or the mitochondrial inner membrane translocase TIM22 complex. The chain is Mitochondrial inner membrane protein SHH3 from Saccharomyces cerevisiae (strain ATCC 204508 / S288c) (Baker's yeast).